Here is a 417-residue protein sequence, read N- to C-terminus: MSIIHLTTLNFSLLWTIALPPIAGTIIGYFTNDIAIKMLFRPYKAVYIGERRLPFTPGLIPRNQERLAKKISDTIMGSLLTPEELQNLARRLLQTERVQAAILWLLNLAIQQVKDDKNQKTAKILADILRDLFSESLPRLLKALARREDFLEQQINQIFDQVLLDFRLTDAQARQFADWLLETVVPPDVLRRTLIDFLTDRNIQVIDEGFREKTSGTYWVVANLFGLSNTLVRLRSFCLEEQELANTRLKEILLSLEVRSRLREWLQSLCLQNLPVSTVRQLRKTTRETVRSYIQESGADFLQNLGETVDWEQISILIMNRLQTSAALTTSLETISQELALILERYLEEDLEKIVAQAIPILSIDQVIINRVNATSPENLEMAIQGIVKSELQAIVNIGGVLGFLVGVFQSILLIFR.

2 consecutive transmembrane segments (helical) span residues 11-31 (FSLL…GYFT) and 395-415 (IVNI…ILLI).

Belongs to the UPF0754 family.

The protein resides in the cell inner membrane. The chain is UPF0754 membrane protein PCC8801_0398 from Rippkaea orientalis (strain PCC 8801 / RF-1) (Cyanothece sp. (strain PCC 8801)).